A 923-amino-acid polypeptide reads, in one-letter code: Isoleucine--tRNA ligase (923 aa).

The 'HIGH' region motif lies at 57–67; it reads PYANGDIHIGT. Residue Glu561 participates in L-isoleucyl-5'-AMP binding. The 'KMSKS' region motif lies at 602-606; sequence AMHKS. Lys605 lines the ATP pocket. Cys895, Cys898, Cys915, and Cys918 together coordinate Zn(2+).

The protein belongs to the class-I aminoacyl-tRNA synthetase family. IleS type 1 subfamily. In terms of assembly, monomer. It depends on Zn(2+) as a cofactor.

The protein localises to the cytoplasm. The enzyme catalyses tRNA(Ile) + L-isoleucine + ATP = L-isoleucyl-tRNA(Ile) + AMP + diphosphate. Functionally, catalyzes the attachment of isoleucine to tRNA(Ile). As IleRS can inadvertently accommodate and process structurally similar amino acids such as valine, to avoid such errors it has two additional distinct tRNA(Ile)-dependent editing activities. One activity is designated as 'pretransfer' editing and involves the hydrolysis of activated Val-AMP. The other activity is designated 'posttransfer' editing and involves deacylation of mischarged Val-tRNA(Ile). In Brachyspira hyodysenteriae (strain ATCC 49526 / WA1), this protein is Isoleucine--tRNA ligase.